The sequence spans 355 residues: Uroporphyrinogen decarboxylase (355 aa).

Substrate contacts are provided by residues 27 to 31 (RQAGR), aspartate 77, tyrosine 154, threonine 209, and histidine 328.

It belongs to the uroporphyrinogen decarboxylase family. In terms of assembly, homodimer.

The protein localises to the cytoplasm. It catalyses the reaction uroporphyrinogen III + 4 H(+) = coproporphyrinogen III + 4 CO2. It functions in the pathway porphyrin-containing compound metabolism; protoporphyrin-IX biosynthesis; coproporphyrinogen-III from 5-aminolevulinate: step 4/4. Catalyzes the decarboxylation of four acetate groups of uroporphyrinogen-III to yield coproporphyrinogen-III. The protein is Uroporphyrinogen decarboxylase of Vibrio cholerae serotype O1 (strain ATCC 39541 / Classical Ogawa 395 / O395).